The primary structure comprises 743 residues: Putative pentatricopeptide repeat-containing protein At1g68930 (743 aa).

PPR repeat units lie at residues 40 to 70 (ETFLYNNIVHAYALMKSSTYARRVFDRIPQP), 71 to 101 (NLFSWNNLLLAYSKAGLISEMESTFEKLPDR), 102 to 132 (DGVTWNVLIEGYSLSGLVGAAVKAYNTMMRD), 138 to 172 (TRVTLMTMLKLSSSNGHVSLGKQIHGQVIKLGFES), 173 to 203 (YLLVGSPLLYMYANVGCISDAKKVFYGLDDR), 204 to 233 (NTVMYNSLMGGLLACGMIEDALQLFRGMEK), 234 to 268 (DSVSWAAMIKGLAQNGLAKEAIECFREMKVQGLKM), 269 to 303 (DQYPFGSVLPACGGLGAINEGKQIHACIIRTNFQD), 304 to 334 (HIYVGSALIDMYCKCKCLHYAKTVFDRMKQK), 335 to 369 (NVVSWTAMVVGYGQTGRAEEAVKIFLDMQRSGIDP), 370 to 404 (DHYTLGQAISACANVSSLEEGSQFHGKAITSGLIH), 405 to 435 (YVTVSNSLVTLYGKCGDIDDSTRLFNEMNVR), 436 to 470 (DAVSWTAMVSAYAQFGRAVETIQLFDKMVQHGLKP), 471 to 506 (DGVTLTGVISACSRAGLVEKGQRYFKLMTSEYGIVP), and 507 to 537 (SIGHYSCMIDLFSRSGRLEEAMRFINGMPFP). A type E motif region spans residues 542-617 (GWTTLLSACR…EPGQSWIKWK (76 aa)). Residues 618 to 648 (GKLHSFSADDESSPYLDQIYAKLEELNNKII) form a type E(+) motif region. Residues 649-743 (DNGYKPDTSF…DGTCSCGDFW (95 aa)) form a type DYW motif region.

The protein belongs to the PPR family. PCMP-H subfamily.

The sequence is that of Putative pentatricopeptide repeat-containing protein At1g68930 (PCMP-H22) from Arabidopsis thaliana (Mouse-ear cress).